The following is a 328-amino-acid chain: Probable tRNA pseudouridine synthase B (328 aa).

Catalysis depends on D71, which acts as the Nucleophile. A PUA domain is found at 238–313 (LPKIWVRDSA…LVARVDRVIM (76 aa)).

The protein belongs to the pseudouridine synthase TruB family. Type 2 subfamily.

The catalysed reaction is uridine(55) in tRNA = pseudouridine(55) in tRNA. Functionally, could be responsible for synthesis of pseudouridine from uracil-55 in the psi GC loop of transfer RNAs. The protein is Probable tRNA pseudouridine synthase B of Pyrobaculum islandicum (strain DSM 4184 / JCM 9189 / GEO3).